A 636-amino-acid chain; its full sequence is Threonine--tRNA ligase (636 aa).

Positions Met1–Ser61 constitute a TGS domain. Residues Glu244 to Pro534 are catalytic. Residues Cys335, His386, and His511 each contribute to the Zn(2+) site.

The protein belongs to the class-II aminoacyl-tRNA synthetase family. In terms of assembly, homodimer. Zn(2+) serves as cofactor.

The protein resides in the cytoplasm. It catalyses the reaction tRNA(Thr) + L-threonine + ATP = L-threonyl-tRNA(Thr) + AMP + diphosphate + H(+). Its function is as follows. Catalyzes the attachment of threonine to tRNA(Thr) in a two-step reaction: L-threonine is first activated by ATP to form Thr-AMP and then transferred to the acceptor end of tRNA(Thr). Also edits incorrectly charged L-seryl-tRNA(Thr). The chain is Threonine--tRNA ligase from Natranaerobius thermophilus (strain ATCC BAA-1301 / DSM 18059 / JW/NM-WN-LF).